Here is a 726-residue protein sequence, read N- to C-terminus: WD repeat-containing and planar cell polarity effector protein fritz homolog (726 aa).

WD repeat units lie at residues 305 to 343 (LRSK…TLLA) and 344 to 383 (QAEL…INIQ). A compositionally biased stretch (polar residues) spans 642 to 660 (SSGSTPKHTIQQKIPNGPS). Residues 642–717 (SSGSTPKHTI…RRQDTEDVGS (76 aa)) form a disordered region. Residues 672–685 (MEETEEEEEEEEEA) show a composition bias toward acidic residues. Positions 701-712 (GELREDHRRQDT) are enriched in basic and acidic residues.

The protein belongs to the WD repeat fritz family. Component of the CPLANE (ciliogenesis and planar polarity effectors) complex, composed of INTU, FUZ and WDPCP. Interacts with CPLANE1.

The protein localises to the cell membrane. It is found in the cytoplasm. The protein resides in the cytoskeleton. Its subcellular location is the cilium axoneme. It localises to the cilium basal body. In terms of biological role, probable effector of the planar cell polarity signaling pathway which regulates the septin cytoskeleton in both ciliogenesis and collective cell movements. Together with FUZ and WDPCP proposed to function as core component of the CPLANE (ciliogenesis and planar polarity effectors) complex involved in the recruitment of peripheral IFT-A proteins to basal bodies. Binds phosphatidylinositol 3-phosphate with highest affinity, followed by phosphatidylinositol 4-phosphate and phosphatidylinositol 5-phosphate. This Rattus norvegicus (Rat) protein is WD repeat-containing and planar cell polarity effector protein fritz homolog (Wdpcp).